A 220-amino-acid polypeptide reads, in one-letter code: MRLLITGTDTGVGKTFITYNLAKELKERGYKVGCLKPVETYVREVPEDGSLLSKATGQSVNEIVPVRFSLPLAPYAATLEEGRDFALEELGKHYEELSKKYKFLLVEGAGGIAVPIKKNYTYANLARDWKLKVLIVGRAGLGTINHTFLTWYYAKATGLEVIGIILNGFTGEDVSERTNPQIIEEMTGIKPYKVPRIQDVELPKDIRTGLADYVLSRFTP.

Position 11–16 (11–16 (GVGKTF)) interacts with ATP. A Mg(2+)-binding site is contributed by threonine 15. Lysine 36 is a catalytic residue. Position 40 (threonine 40) interacts with substrate. ATP is bound by residues aspartate 48 and 107–110 (EGAG). Aspartate 48 and glutamate 107 together coordinate Mg(2+).

This sequence belongs to the dethiobiotin synthetase family. Homodimer. Requires Mg(2+) as cofactor.

The protein localises to the cytoplasm. The enzyme catalyses (7R,8S)-7,8-diammoniononanoate + CO2 + ATP = (4R,5S)-dethiobiotin + ADP + phosphate + 3 H(+). Its pathway is cofactor biosynthesis; biotin biosynthesis; biotin from 7,8-diaminononanoate: step 1/2. Catalyzes a mechanistically unusual reaction, the ATP-dependent insertion of CO2 between the N7 and N8 nitrogen atoms of 7,8-diaminopelargonic acid (DAPA, also called 7,8-diammoniononanoate) to form a ureido ring. This is ATP-dependent dethiobiotin synthetase BioD from Aquifex aeolicus (strain VF5).